A 334-amino-acid polypeptide reads, in one-letter code: N-acetyl-gamma-glutamyl-phosphate reductase (334 aa).

Cysteine 154 is an active-site residue.

Belongs to the NAGSA dehydrogenase family. Type 1 subfamily.

It is found in the cytoplasm. The catalysed reaction is N-acetyl-L-glutamate 5-semialdehyde + phosphate + NADP(+) = N-acetyl-L-glutamyl 5-phosphate + NADPH + H(+). It participates in amino-acid biosynthesis; L-arginine biosynthesis; N(2)-acetyl-L-ornithine from L-glutamate: step 3/4. Its function is as follows. Catalyzes the NADPH-dependent reduction of N-acetyl-5-glutamyl phosphate to yield N-acetyl-L-glutamate 5-semialdehyde. The protein is N-acetyl-gamma-glutamyl-phosphate reductase of Buchnera aphidicola subsp. Acyrthosiphon pisum (strain 5A).